We begin with the raw amino-acid sequence, 153 residues long: Large ribosomal subunit protein uL30 (153 aa).

The protein belongs to the universal ribosomal protein uL30 family. In terms of assembly, part of the 50S ribosomal subunit.

The protein is Large ribosomal subunit protein uL30 of Methanocorpusculum labreanum (strain ATCC 43576 / DSM 4855 / Z).